We begin with the raw amino-acid sequence, 334 residues long: DNA-directed RNA polymerase subunit alpha (334 aa).

The segment at 1-234 (MQTKVNELLK…SQLAAFVELQ (234 aa)) is alpha N-terminal domain (alpha-NTD). The tract at residues 248 to 334 (IDPILLRPVD…LKDQDKKASG (87 aa)) is alpha C-terminal domain (alpha-CTD).

The protein belongs to the RNA polymerase alpha chain family. Homodimer. The RNAP catalytic core consists of 2 alpha, 1 beta, 1 beta' and 1 omega subunit. When a sigma factor is associated with the core the holoenzyme is formed, which can initiate transcription.

The enzyme catalyses RNA(n) + a ribonucleoside 5'-triphosphate = RNA(n+1) + diphosphate. Its function is as follows. DNA-dependent RNA polymerase catalyzes the transcription of DNA into RNA using the four ribonucleoside triphosphates as substrates. The protein is DNA-directed RNA polymerase subunit alpha of Thioalkalivibrio sulfidiphilus (strain HL-EbGR7).